The primary structure comprises 428 residues: Dihydroorotase (428 aa).

Zn(2+)-binding residues include H59 and H61. Substrate is bound by residues 61 to 63 and N93; that span reads HLR. The Zn(2+) site is built by D151, H178, and H231. N277 is a binding site for substrate. D304 contributes to the Zn(2+) binding site. The active site involves D304. Substrate is bound by residues H308 and 322–323; that span reads FG.

It belongs to the metallo-dependent hydrolases superfamily. DHOase family. Class I DHOase subfamily. Requires Zn(2+) as cofactor.

The enzyme catalyses (S)-dihydroorotate + H2O = N-carbamoyl-L-aspartate + H(+). The protein operates within pyrimidine metabolism; UMP biosynthesis via de novo pathway; (S)-dihydroorotate from bicarbonate: step 3/3. Its function is as follows. Catalyzes the reversible cyclization of carbamoyl aspartate to dihydroorotate. The polypeptide is Dihydroorotase (Halalkalibacterium halodurans (strain ATCC BAA-125 / DSM 18197 / FERM 7344 / JCM 9153 / C-125) (Bacillus halodurans)).